The following is a 320-amino-acid chain: Malate dehydrogenase (320 aa).

Residues 10-15 (GAGNIG) and Asp-34 contribute to the NAD(+) site. Residues Arg-83 and Arg-89 each coordinate substrate. NAD(+) contacts are provided by residues Asn-96 and 119–121 (ITN). Asn-121 and Arg-152 together coordinate substrate. The active-site Proton acceptor is the His-176.

The protein belongs to the LDH/MDH superfamily. MDH type 3 family.

It catalyses the reaction (S)-malate + NAD(+) = oxaloacetate + NADH + H(+). In terms of biological role, catalyzes the reversible oxidation of malate to oxaloacetate. This is Malate dehydrogenase from Rhizorhabdus wittichii (strain DSM 6014 / CCUG 31198 / JCM 15750 / NBRC 105917 / EY 4224 / RW1) (Sphingomonas wittichii).